We begin with the raw amino-acid sequence, 590 residues long: MHRYRTHTCGALRDSDIDQTVRVSGWCHRIRDHGGLLFIDLRDHYGLTQCVADPDSPAFKDAEKLRAEWVVRIDGRVRRRPEGTDNDDLPTGKVEIFITEIEVLGPAGELPLPVFGEQDYPEDVRLRYRFLDLRREKLHQNIMTRGAIVDAMRKRMKEQGFFEFQTPILTASSPEGARDFLVPSRIHPGKFYALPQAPQQYKQLLMMSGFDRYFQIAPCFRDEDPRADRLPGEFYQLDVEMSFVTQDDVFAAMEPVITGVFEDFAKGKPVTKSWPRIPYFESLRKYGTDKPDLRNPLEMQDVSEHFRGSGFKVFARMLEEERNQVWAIPGPGGGSRAFCDRMNSWAQGEGQPGLGYIMWREGNEGAGPLANNIGPERTEAIRVALGLKAGDAAFFVAGDPAKFVKFAGLARTKVGEELNLIDKDQFALAWVVDFPMYEYNEDDKKVDFSHNPFSMPQGGMDALTSQDPLTIKAFQYDITCNGYEIASGGIRNHRPEAMVKAFEIAGYGEQEVIDRFGGMYRAFQYGAPPHGGMAAGVDRIVMLLCGTNNLREISLFPMNQRAEDLLMGAPSQVAPKQLRELHIRLNLPES.

Glutamate 175 serves as a coordination point for L-aspartate. Residues 199-202 form an aspartate region; it reads QQYK. 2 residues coordinate L-aspartate: arginine 221 and histidine 450. 221–223 provides a ligand contact to ATP; that stretch reads RDE. Residue glutamate 484 participates in ATP binding. Arginine 491 is an L-aspartate binding site. 536–539 lines the ATP pocket; sequence GVDR.

This sequence belongs to the class-II aminoacyl-tRNA synthetase family. Type 1 subfamily. Homodimer.

The protein localises to the cytoplasm. It catalyses the reaction tRNA(Asx) + L-aspartate + ATP = L-aspartyl-tRNA(Asx) + AMP + diphosphate. Functionally, aspartyl-tRNA synthetase with relaxed tRNA specificity since it is able to aspartylate not only its cognate tRNA(Asp) but also tRNA(Asn). Reaction proceeds in two steps: L-aspartate is first activated by ATP to form Asp-AMP and then transferred to the acceptor end of tRNA(Asp/Asn). The protein is Aspartate--tRNA(Asp/Asn) ligase of Rhodopseudomonas palustris (strain HaA2).